We begin with the raw amino-acid sequence, 424 residues long: Serine--tRNA ligase (424 aa).

230–232 (TAE) is an L-serine binding site. 261 to 263 (RSE) contributes to the ATP binding site. E284 lines the L-serine pocket. 348-351 (EISS) lines the ATP pocket. Residue S382 participates in L-serine binding.

It belongs to the class-II aminoacyl-tRNA synthetase family. Type-1 seryl-tRNA synthetase subfamily. In terms of assembly, homodimer. The tRNA molecule binds across the dimer.

The protein resides in the cytoplasm. The enzyme catalyses tRNA(Ser) + L-serine + ATP = L-seryl-tRNA(Ser) + AMP + diphosphate + H(+). The catalysed reaction is tRNA(Sec) + L-serine + ATP = L-seryl-tRNA(Sec) + AMP + diphosphate + H(+). It participates in aminoacyl-tRNA biosynthesis; selenocysteinyl-tRNA(Sec) biosynthesis; L-seryl-tRNA(Sec) from L-serine and tRNA(Sec): step 1/1. Functionally, catalyzes the attachment of serine to tRNA(Ser). Is also able to aminoacylate tRNA(Sec) with serine, to form the misacylated tRNA L-seryl-tRNA(Sec), which will be further converted into selenocysteinyl-tRNA(Sec). This Solibacter usitatus (strain Ellin6076) protein is Serine--tRNA ligase.